The primary structure comprises 393 residues: MDALLVVNAGSSSLKFQVFGIVGMDLTRQIRGKVDGIGTRPRLQATAADGTQLIDQTYDAKAVRDLPAAITEARRWLLTLEGFELQAVGHRVVHGGPDYTRPVLIDATVLDHLAGYQDLAPLHQPNNLAPIRLAMEINPDVPQVACFDTAFHRGHAKHTDCYALPRSFYDEGVRRYGFHGLSYEYIAERLREVASRAAKGRVVVAHLGSGASMCGLRDGRSIESTMLHRPSTGCRWDTPGQLDPGVVLYLILQKGMKAQAVSDLLYHDAGLKGLSGLSNDMRDLLASDDPHAALSVAHFVYRCVLNGGMLAAALGGIDAFVFTAGVGENSPPIRARIVEGLAWLGAELDPAANEAGAALISTATSRVAVHVLPTDEELMIARHTLALISAPNA.

Asparagine 8 serves as a coordination point for Mg(2+). Residue lysine 15 coordinates ATP. Arginine 91 contacts substrate. Aspartate 148 acts as the Proton donor/acceptor in catalysis. Residues 206-210 (HLGSG), 280-282 (DMR), and 325-329 (GVGEN) each bind ATP. Mg(2+) is bound at residue glutamate 376.

This sequence belongs to the acetokinase family. Homodimer. Mg(2+) serves as cofactor. The cofactor is Mn(2+).

The protein localises to the cytoplasm. The catalysed reaction is acetate + ATP = acetyl phosphate + ADP. The protein operates within metabolic intermediate biosynthesis; acetyl-CoA biosynthesis; acetyl-CoA from acetate: step 1/2. Functionally, catalyzes the formation of acetyl phosphate from acetate and ATP. Can also catalyze the reverse reaction. The sequence is that of Acetate kinase from Rhizobium meliloti (Ensifer meliloti).